Reading from the N-terminus, the 269-residue chain is Formamidopyrimidine-DNA glycosylase (269 aa).

The Schiff-base intermediate with DNA role is filled by Pro-2. Glu-3 acts as the Proton donor in catalysis. Catalysis depends on Lys-57, which acts as the Proton donor; for beta-elimination activity. 3 residues coordinate DNA: His-90, Arg-109, and Lys-150. The FPG-type zinc finger occupies 235-269 (QVYGRHGEPCYTCGEFIQIAKYGQRSSFFCPSCQN). The active-site Proton donor; for delta-elimination activity is the Arg-259.

It belongs to the FPG family. In terms of assembly, monomer. It depends on Zn(2+) as a cofactor.

It carries out the reaction Hydrolysis of DNA containing ring-opened 7-methylguanine residues, releasing 2,6-diamino-4-hydroxy-5-(N-methyl)formamidopyrimidine.. The catalysed reaction is 2'-deoxyribonucleotide-(2'-deoxyribose 5'-phosphate)-2'-deoxyribonucleotide-DNA = a 3'-end 2'-deoxyribonucleotide-(2,3-dehydro-2,3-deoxyribose 5'-phosphate)-DNA + a 5'-end 5'-phospho-2'-deoxyribonucleoside-DNA + H(+). In terms of biological role, involved in base excision repair of DNA damaged by oxidation or by mutagenic agents. Acts as a DNA glycosylase that recognizes and removes damaged bases. Has a preference for oxidized purines, such as 7,8-dihydro-8-oxoguanine (8-oxoG). Has AP (apurinic/apyrimidinic) lyase activity and introduces nicks in the DNA strand. Cleaves the DNA backbone by beta-delta elimination to generate a single-strand break at the site of the removed base with both 3'- and 5'-phosphates. This Baumannia cicadellinicola subsp. Homalodisca coagulata protein is Formamidopyrimidine-DNA glycosylase.